A 509-amino-acid chain; its full sequence is Bestrophin-2a (509 aa).

Residues 1 to 31 (MTVTYTARVANARFGGFSQLLLLWRGSIYKL) are Cytoplasmic-facing. Residue Ala10 coordinates Ca(2+). Residues 32–51 (LWRELLCFLGFYMALSAAYR) traverse the membrane as a helical segment. Topologically, residues 52-60 (FVLTEGQKR) are extracellular. The chain crosses the membrane as a helical span at residues 61-82 (YFEKLVIYCDQYASLIPVSFVL). At 83-238 (GFYVTLVVNR…WISVPLVYTQ (156 aa)) the chain is on the cytoplasmic side. Residues 239-255 (VVTIALYSYFLACLIGR) form a helical membrane-spanning segment. The Extracellular segment spans residues 256–274 (QFLDPAQGYKDHDLDLCVP). A helical membrane pass occupies residues 275-288 (IFTLLQFFFYAGWL). Residues 289–509 (KVAEQLINPF…PIGEEEENLA (221 aa)) lie on the Cytoplasmic side of the membrane. Ca(2+)-binding residues include Gln293, Asn296, Asp301, and Asp304. The segment at 454-509 (DPGLPEPEAPPPAGPEPLTLIPGPVEPFSIVTMPGPRGPAPPWLPSPIGEEEENLA) is disordered. Composition is skewed to pro residues over residues 457 to 468 (LPEPEAPPPAGP) and 489 to 498 (PRGPAPPWLP).

This sequence belongs to the anion channel-forming bestrophin (TC 1.A.46) family. Calcium-sensitive chloride channel subfamily. Pentamer. Interacts with GLUL; this interaction tethers a fraction of GLUL to the membrane, causing a decrease of cytosolic glutamine synthase (GS) activity and inhibits the chloride channel activity of BEST2 by affecting the gating at the aperture in the absence of intracellular glutamate. Mainly confined to the retinal pigment epithelium. Expressed in colon.

The protein resides in the cell membrane. The protein localises to the basolateral cell membrane. It catalyses the reaction chloride(in) = chloride(out). The enzyme catalyses hydrogencarbonate(in) = hydrogencarbonate(out). It carries out the reaction L-glutamate(out) = L-glutamate(in). The catalysed reaction is iodide(out) = iodide(in). It catalyses the reaction L-glutamine(out) = L-glutamine(in). Chloride channel activity is allosterically inhibited by GLUL/glutamine synthase (GS) which affects the gating at the aperture in the absence of intracellular glutamate. Inhibitory effect of GLUL is relieved upon increasing of L-glutamate intracellular level. In terms of biological role, ligand-gated anion channel that allows the movement of anions across cell membranes when activated by calcium (Ca2+). Transports a large specter of anions, namely mediates the movement of chloride, L-glutamate and iodide. Calcium-binding triggers the dilation of the aperture, but calcium-dependent gating is only effective when the size of the passing anion is bigger than the closed aperture. Mediates the calcium-activated hydrogencarbonate movement and participates in colonic hydrogencarbonate secretion concomitant with mucin secretion. In non-pigmented epithelium (NPE), mediates the efflux of intracellular L-glutamate; binding of intracellular L-glutamate activates and open both the neck and the aperture of the channel, leading to L-glutamate exit promoting chloride influx movement from the extracellular side in trans. Also exhibits a directional permeability for intracellular glutamine, in a similar manner as for L-glutamate. This chain is Bestrophin-2a, found in Homo sapiens (Human).